Consider the following 1286-residue polypeptide: DNA-directed RNA polymerase subunit beta' (1286 aa).

4 residues coordinate Zn(2+): Cys58, Cys60, Cys73, and Cys76. 3 residues coordinate Mg(2+): Asp533, Asp535, and Asp537. Residues Cys867, Cys944, Cys951, and Cys954 each coordinate Zn(2+).

Belongs to the RNA polymerase beta' chain family. In terms of assembly, the RNAP catalytic core consists of 2 alpha, 1 beta, 1 beta' and 1 omega subunit. When a sigma factor is associated with the core the holoenzyme is formed, which can initiate transcription. Mg(2+) is required as a cofactor. The cofactor is Zn(2+).

It carries out the reaction RNA(n) + a ribonucleoside 5'-triphosphate = RNA(n+1) + diphosphate. In terms of biological role, DNA-dependent RNA polymerase catalyzes the transcription of DNA into RNA using the four ribonucleoside triphosphates as substrates. This Tropheryma whipplei (strain TW08/27) (Whipple's bacillus) protein is DNA-directed RNA polymerase subunit beta'.